Reading from the N-terminus, the 548-residue chain is Tau-cadinol synthase (548 aa).

Mg(2+) is bound by residues Asp-303 and Asp-307. Substrate contacts are provided by Asp-303, Asp-307, and Arg-443. The short motif at 303–307 (DDTYD) is the DDXXD motif element.

This sequence belongs to the terpene synthase family. In terms of assembly, monomer. Mg(2+) is required as a cofactor. The cofactor is Mn(2+). In terms of tissue distribution, constitutively expressed in aerial tissues, but barely observed in roots.

It localises to the cytoplasm. The enzyme catalyses (2E,6E)-farnesyl diphosphate + H2O = tau-cadinol + diphosphate. It functions in the pathway secondary metabolite biosynthesis; terpenoid biosynthesis. In terms of biological role, sesquiterpene synthase that catalyzes the formation of a blend of sesquiterpenes and sesquiterpenoid alcohols. Converts farnesyl diphosphate to tau-cadinol. This chain is Tau-cadinol synthase, found in Zea mays (Maize).